The chain runs to 210 residues: Ribosomal RNA small subunit methyltransferase G (210 aa).

S-adenosyl-L-methionine-binding positions include Leu78, Ile124–Glu125, and Arg138.

Belongs to the methyltransferase superfamily. RNA methyltransferase RsmG family.

The protein localises to the cytoplasm. It catalyses the reaction guanosine(527) in 16S rRNA + S-adenosyl-L-methionine = N(7)-methylguanosine(527) in 16S rRNA + S-adenosyl-L-homocysteine. Specifically methylates the N7 position of guanine in position 527 of 16S rRNA. The sequence is that of Ribosomal RNA small subunit methyltransferase G from Bordetella bronchiseptica (strain ATCC BAA-588 / NCTC 13252 / RB50) (Alcaligenes bronchisepticus).